The primary structure comprises 227 residues: Urease accessory protein UreG (227 aa).

Over residues 1–10 (MHLDHAHTHD) the composition is skewed to basic and acidic residues. Residues 1 to 22 (MHLDHAHTHDGPSAVSADAHRP) are disordered. 35–42 (GPVGSGKT) contacts GTP.

The protein belongs to the SIMIBI class G3E GTPase family. UreG subfamily. In terms of assembly, homodimer. UreD, UreF and UreG form a complex that acts as a GTP-hydrolysis-dependent molecular chaperone, activating the urease apoprotein by helping to assemble the nickel containing metallocenter of UreC. The UreE protein probably delivers the nickel.

The protein localises to the cytoplasm. Functionally, facilitates the functional incorporation of the urease nickel metallocenter. This process requires GTP hydrolysis, probably effectuated by UreG. This is Urease accessory protein UreG from Streptomyces avermitilis (strain ATCC 31267 / DSM 46492 / JCM 5070 / NBRC 14893 / NCIMB 12804 / NRRL 8165 / MA-4680).